Here is a 1479-residue protein sequence, read N- to C-terminus: Type VII secretion system protein EssC (1479 aa).

The segment at M1–E189 is required for substrate secretion, protein missing this segment is unstable. Topologically, residues M1–N229 are cytoplasmic. A helical transmembrane segment spans residues T230–V252. At R253–G256 the chain is on the extracellular side. The helical transmembrane segment at I257–S279 threads the bilayer. Residues E280–K1479 are Cytoplasmic-facing. 2 FtsK domains span residues D652–N846 and Q997–S1183. ATP is bound by residues G672 to S679 and G1014 to T1021. The segment at M1249 to K1479 is required for substrate secretion, truncated protein is stable.

Belongs to the EssC family. As to quaternary structure, homooligomer. Interacts with EsaE.

The protein resides in the cell membrane. Its function is as follows. Component of the type VII secretion system (Ess). Required for the secretion of substrates including EsxA and EsxB. However, unable to support secretion of the substrate protein EsxC. This Staphylococcus aureus (strain NCTC 8325 / PS 47) protein is Type VII secretion system protein EssC.